We begin with the raw amino-acid sequence, 2723 residues long: Zinc finger protein 292 (2723 aa).

The C2H2-type 1 zinc-finger motif lies at 569–591; it reads YSCPICAKNFNSKETFVPHVTLH. The interval 608-633 is disordered; sequence RLGRPPKITTTNENQKTNTVAKQEQR. Over residues 615–629 the composition is skewed to polar residues; it reads ITTTNENQKTNTVAK. Position 654 is a phosphoserine (Ser-654). 5 C2H2-type zinc fingers span residues 681–705, 722–744, 750–774, 779–803, and 807–831; these read FNCPVTFCKKGFKYFKNLIAHVKGH, VICQYCRRHFVSVTHLNDHLQMH, YICIQMKCKAGFNSYAELLTHRKEH, AKCMFPKCGRIFSEAYLLYDHEAQH, and YTCKFTGCGKVYRSQGELEKHLDDH. Residues 825-834 show a composition bias toward basic and acidic residues; sequence EKHLDDHSTP. Residues 825 to 860 are disordered; the sequence is EKHLDDHSTPPEKVLPPEAQLNSSGDSIQPSEVNQN. Over residues 844–860 the composition is skewed to polar residues; it reads QLNSSGDSIQPSEVNQN. Residues 1098–1123 form a C2H2-type 7 zinc finger; the sequence is FSCQVEGCTRTYNSSQSIGKHMKTAH. Residue Lys-1117 is modified to N6-acetyllysine. Ser-1159 carries the phosphoserine modification. Positions 1331–1364 are disordered; it reads SSTNAQQSAPEKVKKDRGRGPNGKERKPKHNKRA. A compositionally biased stretch (basic and acidic residues) spans 1341–1355; the sequence is EKVKKDRGRGPNGKE. A C2H2-type 8; degenerate zinc finger spans residues 1375–1397; sequence FICSRCYRAFTNPRSLGGHLSKR. A compositionally biased stretch (polar residues) spans 1588 to 1627; it reads SFPNSGGPSQNFTSNSSRVSVISGPQNTRSSHLNKKGNSA. The disordered stretch occupies residues 1588 to 1634; it reads SFPNSGGPSQNFTSNSSRVSVISGPQNTRSSHLNKKGNSASKRRKKV. Positions 1827 to 1854 form a coiled coil; it reads QSEVSHKEDQIQEILEGLQKLKLENDLS. 2 consecutive C2H2-type zinc fingers follow at residues 1902–1927 and 1947–1972; these read FVCQNQGCNYSAMTKDALFKHYGKIH and FKCVVPTCTKTFTRNSNLRAHCQLVH. A disordered region spans residues 1986-2023; it reads RPYGRKSQSENVPASRSTQVKKQLAMTEENKKESQPAL. The segment covering 1994 to 2006 has biased composition (polar residues); it reads SENVPASRSTQVK. Position 2042 is an N6-acetyllysine (Lys-2042). Residues 2074–2103 are disordered; the sequence is NTQTKGRKIRRHKKEKEEKKRKKPVSQSLE. Over residues 2078-2097 the composition is skewed to basic residues; the sequence is KGRKIRRHKKEKEEKKRKKP. 4 consecutive C2H2-type zinc fingers follow at residues 2114-2139, 2172-2197, 2216-2241, and 2256-2281; these read YRCVHQGCFAAFTIQQNLILHYQAVH, FRCQVSDCSRIFQAITGLIQHYMKLH, FPCDQLECKSSFTTYLNYVVHLEADH, and YKCDCEGCDRIYATRSNLLRHIFNKH. 2 stretches are compositionally biased toward basic residues: residues 2285 to 2294 and 2312 to 2322; these read HKAHLIRPRR and KSKHRGTKHSR. Residues 2285–2345 form a disordered region; the sequence is HKAHLIRPRR…KKKNNLENKN (61 aa). A C2H2-type 15 zinc finger spans residues 2386–2410; the sequence is YPCMIKGCTSVVTSESNIIRHYKCH. The span at 2441 to 2452 shows a compositional bias: basic and acidic residues; the sequence is QEGAKNDVKDSD. Disordered regions lie at residues 2441-2480, 2530-2564, and 2606-2631; these read QEGAKNDVKDSDTCVSESNDNSRTTATVSQKEVEKNEKDE, LKRVNKEKNVSQNKKRKVEKAEPASAAELSSVRKE, and QKKNTDKDHPNTGNKKGSHSNSRKNI. Polar residues predominate over residues 2453–2470; it reads TCVSESNDNSRTTATVSQ. Residues 2606–2615 are compositionally biased toward basic and acidic residues; the sequence is QKKNTDKDHP.

It belongs to the krueppel C2H2-type zinc-finger protein family.

Its subcellular location is the nucleus. May be involved in transcriptional regulation. This Homo sapiens (Human) protein is Zinc finger protein 292 (ZNF292).